The sequence spans 363 residues: Serpentine receptor class beta-17 (363 aa).

The next 7 helical transmembrane spans lie at 46 to 66 (AFLL…GSII), 75 to 95 (LLAF…SCFL), 120 to 140 (VILA…SMLC), 169 to 189 (IGFV…LYMY), 214 to 234 (YIFI…IGLY), 273 to 293 (CAQL…RIFL), and 304 to 324 (VTEF…ICIV).

Belongs to the nematode receptor-like protein srb family.

It localises to the membrane. The polypeptide is Serpentine receptor class beta-17 (srb-17) (Caenorhabditis elegans).